The chain runs to 95 residues: Small ribosomal subunit protein uS19 (95 aa).

This sequence belongs to the universal ribosomal protein uS19 family.

Its function is as follows. Protein S19 forms a complex with S13 that binds strongly to the 16S ribosomal RNA. In Chloroflexus aggregans (strain MD-66 / DSM 9485), this protein is Small ribosomal subunit protein uS19.